A 427-amino-acid polypeptide reads, in one-letter code: Glutamate-1-semialdehyde 2,1-aminomutase (427 aa).

At Lys265 the chain carries N6-(pyridoxal phosphate)lysine.

The protein belongs to the class-III pyridoxal-phosphate-dependent aminotransferase family. HemL subfamily. As to quaternary structure, homodimer. It depends on pyridoxal 5'-phosphate as a cofactor.

Its subcellular location is the cytoplasm. It catalyses the reaction (S)-4-amino-5-oxopentanoate = 5-aminolevulinate. It functions in the pathway porphyrin-containing compound metabolism; protoporphyrin-IX biosynthesis; 5-aminolevulinate from L-glutamyl-tRNA(Glu): step 2/2. This chain is Glutamate-1-semialdehyde 2,1-aminomutase, found in Pseudomonas putida (strain ATCC 700007 / DSM 6899 / JCM 31910 / BCRC 17059 / LMG 24140 / F1).